The primary structure comprises 226 residues: Transmembrane protein 204 (226 aa).

The Cytoplasmic segment spans residues Met1–Arg5. The chain crosses the membrane as a helical span at residues Leu6–Phe26. Residues Thr27–Asn103 lie on the Extracellular side of the membrane. A helical membrane pass occupies residues Leu104 to Leu124. Residues Pro125–Glu136 lie on the Cytoplasmic side of the membrane. A helical membrane pass occupies residues Ala137 to Tyr157. Residues Arg158 to Tyr170 lie on the Extracellular side of the membrane. Asn164 carries N-linked (GlcNAc...) asparagine glycosylation. Residues Leu171–Leu191 form a helical membrane-spanning segment. Over His192–Cys226 the chain is Cytoplasmic.

In terms of tissue distribution, highly expressed in lung, heart, kidney and placenta. Lower expression in thymus, spleen, liver, testis and ovary. Expressed in endothelial and restricted epithelial cell populations.

The protein localises to the cell junction. It localises to the adherens junction. The protein resides in the cell membrane. Functionally, can influence paracellular permeability. Appears to be involved in cell-cell interactions through adherens. The chain is Transmembrane protein 204 (TMEM204) from Homo sapiens (Human).